We begin with the raw amino-acid sequence, 480 residues long: Uridine 5'-monophosphate synthase (480 aa).

N-acetylalanine is present on Ala2. The interval 2 to 214 is OPRTase; the sequence is AAADALLGSL…AFVAANPNDS (213 aa). A Phosphotyrosine modification is found at Tyr37. Ser214 carries the post-translational modification Phosphoserine. A domain linker region spans residues 215–220; that stretch reads LPSVKK. An OMPdecase region spans residues 221-480; sequence EPKELSFGAR…WEAYLSRLAV (260 aa). Ser257 is an orotidine 5'-phosphate binding site. UMP contacts are provided by residues Ser257, Asp259, and 281–283; that span reads KIH. Residues Lys281, Lys314, Asp317, Thr321, Ser372, 430-432, and 450-451 contribute to the orotidine 5'-phosphate site; these read QQY and GR. Active-site for OMPdecase activity residues include Lys314 and Asp317. Residues Asp317, Thr321, Ser372, 430–432, and 450–451 each bind UMP; these read QQY and GR.

It in the N-terminal section; belongs to the purine/pyrimidine phosphoribosyltransferase family. In the C-terminal section; belongs to the OMP decarboxylase family. In terms of assembly, homodimer; dimerization is required for enzymatic activity.

The catalysed reaction is orotidine 5'-phosphate + diphosphate = orotate + 5-phospho-alpha-D-ribose 1-diphosphate. The enzyme catalyses orotidine 5'-phosphate + H(+) = UMP + CO2. It functions in the pathway pyrimidine metabolism; UMP biosynthesis via de novo pathway; UMP from orotate: step 1/2. Its pathway is pyrimidine metabolism; UMP biosynthesis via de novo pathway; UMP from orotate: step 2/2. In terms of biological role, bifunctional enzyme catalyzing the last two steps of de novo pyrimidine biosynthesis, orotate phosphoribosyltransferase (OPRT), which converts orotate to orotidine-5'-monophosphate (OMP), and orotidine-5'-monophosphate decarboxylase (ODC), the terminal enzymatic reaction that decarboxylates OMP to uridine monophosphate (UMP). The chain is Uridine 5'-monophosphate synthase (UMPS) from Bos taurus (Bovine).